The sequence spans 116 residues: Tyrosine-protein phosphatase 10 (116 aa).

The region spanning 1–116 (WRMVWEQNVS…SPTGYGPIVV (116 aa)) is the Tyrosine-protein phosphatase domain. Position 86 (Asp-86) interacts with substrate.

This sequence belongs to the protein-tyrosine phosphatase family.

The catalysed reaction is O-phospho-L-tyrosyl-[protein] + H2O = L-tyrosyl-[protein] + phosphate. The protein is Tyrosine-protein phosphatase 10 (STY-10) of Styela plicata (Wrinkled sea squirt).